We begin with the raw amino-acid sequence, 166 residues long: NADH-ubiquinone oxidoreductase chain 6 (166 aa).

5 helical membrane-spanning segments follow: residues 1-21 (MMYFVYLLSILLVLGFMAFAS), 26-46 (IYGGLSLVLSGGVGCGIVVSL), 47-67 (GGSFLGLIVFLVYLGGMLVVF), 87-107 (VFTNLLIMVGMLGVIWYYFSG), and 139-159 (CGGWELIFSGWILFLTIFVVL).

The protein belongs to the complex I subunit 6 family. In terms of assembly, core subunit of respiratory chain NADH dehydrogenase (Complex I) which is composed of 45 different subunits.

It localises to the mitochondrion inner membrane. It carries out the reaction a ubiquinone + NADH + 5 H(+)(in) = a ubiquinol + NAD(+) + 4 H(+)(out). In terms of biological role, core subunit of the mitochondrial membrane respiratory chain NADH dehydrogenase (Complex I) which catalyzes electron transfer from NADH through the respiratory chain, using ubiquinone as an electron acceptor. Essential for the catalytic activity and assembly of complex I. This Ornithorhynchus anatinus (Duckbill platypus) protein is NADH-ubiquinone oxidoreductase chain 6 (MT-ND6).